A 207-amino-acid polypeptide reads, in one-letter code: Intraflagellar transport protein 43 homolog A (207 aa).

The tract at residues 1–104 (MDDNLQLGDS…GSDDEGDIPV (104 aa)) is disordered.

The protein belongs to the IFT43 family. In terms of assembly, component of IFT complex A.

In terms of biological role, component of IFT complex A (IFT-A) involved in retrograde ciliary transport along microtubules from the ciliary tip to the base. The polypeptide is Intraflagellar transport protein 43 homolog A (ift43a) (Salmo salar (Atlantic salmon)).